A 258-amino-acid polypeptide reads, in one-letter code: Regulatory protein RecX (258 aa).

Belongs to the RecX family.

Its subcellular location is the cytoplasm. In terms of biological role, modulates RecA activity. In Streptococcus mutans serotype c (strain ATCC 700610 / UA159), this protein is Regulatory protein RecX.